The primary structure comprises 313 residues: Fe-S cluster assembly protein dre2 (313 aa).

2 disordered regions span residues 1 to 25 (MSIT…SQKR) and 151 to 187 (GRKK…AQNN). The segment at 20-145 (NGSQKRNLLL…FEKPVQEAAV (126 aa)) is N-terminal SAM-like domain. Positions 146–203 (PLKLGGRKKKDKTNGVNGVQNGVATNGASTNGVGMFDPAQNNDDELIDEDALLSDDDL) are linker. The span at 159-177 (NGVNGVQNGVATNGASTNG) shows a compositional bias: polar residues. Positions 213, 225, 228, and 230 each coordinate [2Fe-2S] cluster. A fe-S binding site A region spans residues 213–230 (CVPETAKKRRRPCKDCTC). The [4Fe-4S] cluster site is built by C276, C279, C287, and C290. 2 short sequence motifs (cx2C motif) span residues 276 to 279 (CNSC) and 287 to 290 (CSSC). The segment at 276–290 (CNSCSLGDAFRCSSC) is fe-S binding site B.

It belongs to the anamorsin family. In terms of assembly, monomer. Interacts with tah18. Interacts with mia40. [2Fe-2S] cluster serves as cofactor. It depends on [4Fe-4S] cluster as a cofactor.

It localises to the cytoplasm. Its subcellular location is the mitochondrion intermembrane space. In terms of biological role, component of the cytosolic iron-sulfur (Fe-S) protein assembly (CIA) machinery required for the maturation of extramitochondrial Fe-S proteins. Part of an electron transfer chain functioning in an early step of cytosolic Fe-S biogenesis, facilitating the de novo assembly of a [4Fe-4S] cluster on the scaffold complex cfd1-nbp35. Electrons are transferred to dre2 from NADPH via the FAD- and FMN-containing protein tah18. Tah18-dre2 are also required for the assembly of the diferric tyrosyl radical cofactor of ribonucleotide reductase (RNR), probably by providing electrons for reduction during radical cofactor maturation in the catalytic small subunit rnr2. The polypeptide is Fe-S cluster assembly protein dre2 (Aspergillus oryzae (strain ATCC 42149 / RIB 40) (Yellow koji mold)).